A 187-amino-acid polypeptide reads, in one-letter code: RNA pyrophosphohydrolase (187 aa).

In terms of domain architecture, Nudix hydrolase spans 6-149; the sequence is GYRANVGIIL…KRQVYRLALT (144 aa). Positions 38–59 match the Nudix box motif; it reads GGIKSGETPTQAMYRELAEETG.

The protein belongs to the Nudix hydrolase family. RppH subfamily. A divalent metal cation serves as cofactor.

Functionally, accelerates the degradation of transcripts by removing pyrophosphate from the 5'-end of triphosphorylated RNA, leading to a more labile monophosphorylated state that can stimulate subsequent ribonuclease cleavage. The polypeptide is RNA pyrophosphohydrolase (Nitrosomonas eutropha (strain DSM 101675 / C91 / Nm57)).